The primary structure comprises 289 residues: Oxaloacetate decarboxylase (289 aa).

A substrate-binding site is contributed by Ser50. Asp88 contributes to the Mg(2+) binding site. Positions 159 and 235 each coordinate substrate.

This sequence belongs to the isocitrate lyase/PEP mutase superfamily. Oxaloacetate decarboxylase family. In terms of assembly, homotetramer; dimer of dimers. Requires Mg(2+) as cofactor.

It catalyses the reaction oxaloacetate + H(+) = pyruvate + CO2. Its function is as follows. Catalyzes the decarboxylation of oxaloacetate into pyruvate. Seems to play a role in maintaining cellular concentrations of bicarbonate and pyruvate. The chain is Oxaloacetate decarboxylase from Pseudomonas putida (strain GB-1).